A 243-amino-acid chain; its full sequence is 3-deoxy-manno-octulosonate cytidylyltransferase (243 aa).

Belongs to the KdsB family.

The protein resides in the cytoplasm. It carries out the reaction 3-deoxy-alpha-D-manno-oct-2-ulosonate + CTP = CMP-3-deoxy-beta-D-manno-octulosonate + diphosphate. It participates in nucleotide-sugar biosynthesis; CMP-3-deoxy-D-manno-octulosonate biosynthesis; CMP-3-deoxy-D-manno-octulosonate from 3-deoxy-D-manno-octulosonate and CTP: step 1/1. The protein operates within bacterial outer membrane biogenesis; lipopolysaccharide biosynthesis. In terms of biological role, activates KDO (a required 8-carbon sugar) for incorporation into bacterial lipopolysaccharide in Gram-negative bacteria. The sequence is that of 3-deoxy-manno-octulosonate cytidylyltransferase from Bartonella henselae (strain ATCC 49882 / DSM 28221 / CCUG 30454 / Houston 1) (Rochalimaea henselae).